A 317-amino-acid polypeptide reads, in one-letter code: DNA-directed RNA polymerase subunit alpha 2 (317 aa).

The tract at residues 1–227 (MALENLLHPT…NQLRNIVDIE (227 aa)) is alpha N-terminal domain (alpha-NTD). The interval 241-317 (INPILLKHVE…TLIENWPQDL (77 aa)) is alpha C-terminal domain (alpha-CTD).

The protein belongs to the RNA polymerase alpha chain family. As to quaternary structure, homodimer. The RNAP catalytic core consists of 2 alpha, 1 beta, 1 beta' and 1 omega subunit. When a sigma factor is associated with the core the holoenzyme is formed, which can initiate transcription.

The enzyme catalyses RNA(n) + a ribonucleoside 5'-triphosphate = RNA(n+1) + diphosphate. In terms of biological role, DNA-dependent RNA polymerase catalyzes the transcription of DNA into RNA using the four ribonucleoside triphosphates as substrates. In Francisella tularensis subsp. holarctica (strain FTNF002-00 / FTA), this protein is DNA-directed RNA polymerase subunit alpha 2.